The following is a 316-amino-acid chain: Methionyl-tRNA formyltransferase (316 aa).

Residue 109-112 participates in (6S)-5,6,7,8-tetrahydrofolate binding; sequence SLLP.

The protein belongs to the Fmt family.

It carries out the reaction L-methionyl-tRNA(fMet) + (6R)-10-formyltetrahydrofolate = N-formyl-L-methionyl-tRNA(fMet) + (6S)-5,6,7,8-tetrahydrofolate + H(+). Attaches a formyl group to the free amino group of methionyl-tRNA(fMet). The formyl group appears to play a dual role in the initiator identity of N-formylmethionyl-tRNA by promoting its recognition by IF2 and preventing the misappropriation of this tRNA by the elongation apparatus. In Idiomarina loihiensis (strain ATCC BAA-735 / DSM 15497 / L2-TR), this protein is Methionyl-tRNA formyltransferase.